The sequence spans 227 residues: Large ribosomal subunit protein uL10c (227 aa).

The transit peptide at 1-47 (MEATFFTLPSSTSHSYPFSLKSHFNNSLTLPTHPHFKPKSKNLTIRS) directs the protein to the chloroplast.

It belongs to the universal ribosomal protein uL10 family. Part of the 50S ribosomal subunit.

It localises to the plastid. The protein resides in the chloroplast. Functionally, this protein binds directly to 23S ribosomal RNA. The polypeptide is Large ribosomal subunit protein uL10c (RPL10) (Nicotiana tabacum (Common tobacco)).